Here is a 137-residue protein sequence, read N- to C-terminus: Large ribosomal subunit protein eL32 (137 aa).

Positions 95–137 (PSAAEIATPVSSRKRIASSPARQADRCSRSRRSKFRPRRLRAS) are disordered. Positions 123–137 (RSRRSKFRPRRLRAS) are enriched in basic residues.

The protein belongs to the eukaryotic ribosomal protein eL32 family.

In Trichoderma harzianum (Hypocrea lixii), this protein is Large ribosomal subunit protein eL32 (rpl32).